The chain runs to 707 residues: Choline transporter-like protein 4 (707 aa).

The Cytoplasmic segment spans residues 1-33; the sequence is MGGKQDQDKEAYGKPAKYDPSFRGPIRNRSCTD. The chain crosses the membrane as a helical span at residues 34 to 54; that stretch reads IICCVLFFLFILGYIAVGILA. The Extracellular segment spans residues 55–227; sequence WVYGDPKQVL…KIFEDFAQSW (173 aa). 3 N-linked (GlcNAc...) asparagine glycosylation sites follow: Asn-68, Asn-185, and Asn-196. The helical transmembrane segment at 228–248 threads the bilayer; it reads YWILIALGLALVLSLLFILLL. The Cytoplasmic portion of the chain corresponds to 249–250; that stretch reads RL. A helical transmembrane segment spans residues 251–271; that stretch reads VAGPLVFVLIIGVLGVLAYGI. At 272–307 the chain is on the extracellular side; it reads YHCWEEYRVLRDKGASISQLGFTTNLSAYRNVQETW. Asn-296 carries N-linked (GlcNAc...) asparagine glycosylation. A helical transmembrane segment spans residues 308 to 328; that stretch reads LAALIILAVLEGVLLLMLIFL. The Cytoplasmic portion of the chain corresponds to 329-356; it reads RQRICIAIALLKEASRAVGYIMSTMFYP. Residues 357 to 377 traverse the membrane as a helical segment; sequence LVTFALLLVCIAYWAIIALFL. Residues 378–452 lie on the Extracellular side of the membrane; it reads ATSGQPQYVF…AVLGLFWTIN (75 aa). N-linked (GlcNAc...) asparagine glycosylation is found at Asn-391, Asn-403, and Asn-413. A helical transmembrane segment spans residues 453–473; the sequence is WVLALGQCVLAGAFASFYWAF. Topologically, residues 474-498 are cytoplasmic; that stretch reads HKPRDIPTFPLGSAFLRTLRYHTGS. Residues 499–519 form a helical membrane-spanning segment; the sequence is LAFGALILTLVQIARVILEYI. At 520–557 the chain is on the extracellular side; sequence DHKLRGAQNPLTRCILCCFKCCLWCLEKFIKFLNRNAY. A helical transmembrane segment spans residues 558–578; that stretch reads IMIAIYGKNFCVSAKNAFMLL. At 579-594 the chain is on the cytoplasmic side; it reads MRNIVRVVVLDKVTDL. The helical transmembrane segment at 595–615 threads the bilayer; it reads LLFFGKLLVVGGVGVLSFFFF. The Extracellular segment spans residues 616 to 635; that stretch reads TGRIPSLGKTFENPQLNYYW. A helical transmembrane segment spans residues 636–656; the sequence is LPIMVSILGAYLIASGFFSVF. Residues 657-707 are Cytoplasmic-facing; sequence GMCVDTLFLCFLEDLERNDGSADRPYYMSKSLLKILGKKNKGTPGDKKRKK.

Belongs to the CTL (choline transporter-like) family. In terms of processing, N-glycosylated; N-glycosylation of Asn-68 and Asn-391 is required for a proper thiamine pyrophosphate uptake.

It is found in the membrane. It localises to the apical cell membrane. It carries out the reaction choline(out) + n H(+)(in) = choline(in) + n H(+)(out). The enzyme catalyses thiamine diphosphate(out) = thiamine diphosphate(in). Choline transporter that plays a role in the choline-acetylcholine system and is required to the efferent innervation of hair cells in the olivocochlear bundle for the maintenance of physiological function of outer hair cells and the protection of hair cells from acoustic injury. Also described as a thiamine pyrophosphate transporter in colon, may mediate the absorption of microbiota-generated thiamine pyrophosphate and contribute to host thiamine (vitamin B1) homeostasis. This is Choline transporter-like protein 4 from Bos taurus (Bovine).